Here is a 139-residue protein sequence, read N- to C-terminus: Putative pre-16S rRNA nuclease (139 aa).

It belongs to the YqgF nuclease family.

It is found in the cytoplasm. In terms of biological role, could be a nuclease involved in processing of the 5'-end of pre-16S rRNA. The polypeptide is Putative pre-16S rRNA nuclease (Streptococcus pyogenes serotype M3 (strain ATCC BAA-595 / MGAS315)).